Consider the following 388-residue polypeptide: Coproporphyrin III ferrochelatase (388 aa).

Residues serine 59 and tyrosine 124 each contribute to the Fe-coproporphyrin III site. Positions 186 and 276 each coordinate Fe(2+). The tract at residues 349-369 (QSPQHASRAVTDAAATGRRGD) is disordered.

Belongs to the ferrochelatase family.

Its subcellular location is the cytoplasm. It catalyses the reaction Fe-coproporphyrin III + 2 H(+) = coproporphyrin III + Fe(2+). The protein operates within porphyrin-containing compound metabolism; protoheme biosynthesis. Involved in coproporphyrin-dependent heme b biosynthesis. Catalyzes the insertion of ferrous iron into coproporphyrin III to form Fe-coproporphyrin III. This Frankia alni (strain DSM 45986 / CECT 9034 / ACN14a) protein is Coproporphyrin III ferrochelatase.